A 371-amino-acid chain; its full sequence is Solute carrier family 35 member F6 (371 aa).

The first 25 residues, 1–25 (MAWTKHQLFLAGLMLVTGSINTLSA), serve as a signal peptide directing secretion. A run of 2 helical transmembrane segments spans residues 48-68 (FLQA…FYLL) and 89-109 (LLFL…YVAL). In terms of domain architecture, EamA spans 104 to 160 (LMYVALNMTSASSFQMLRGAVIIFTGLFSVAFLGRRLVLSQWLGILATIAGLVVVGL). N110 is a glycosylation site (N-linked (GlcNAc...) asparagine). 7 consecutive transmembrane segments (helical) span residues 117-137 (FQML…AFLG), 140-160 (LVLS…VVGL), 176-196 (VITG…QMVL), 216-236 (GLFG…IPAG), 261-281 (LIAV…FAGI), 295-312 (LDSL…ALGW), and 317-336 (ALQI…YNGL). Positions 347 to 371 (GRPPAEESEQERLLGGSRTPINDAS) are disordered. T365 carries the post-translational modification Phosphothreonine.

The protein belongs to the SLC35F solute transporter family. As to quaternary structure, interacts with SLC25A5.

It localises to the mitochondrion. Its subcellular location is the lysosome membrane. Functionally, involved in the maintenance of mitochondrial membrane potential in pancreatic ductal adenocarcinoma (PDAC) cells. Promotes pancreatic ductal adenocarcinoma (PDAC) cell growth. May play a role as a nucleotide-sugar transporter. The polypeptide is Solute carrier family 35 member F6 (SLC35F6) (Pongo abelii (Sumatran orangutan)).